The primary structure comprises 238 residues: Ribonuclease HII (238 aa).

Residues Gly12–Leu197 enclose the RNase H type-2 domain. A divalent metal cation is bound by residues Asp18, Glu19, and Asp107.

This sequence belongs to the RNase HII family. Mn(2+) serves as cofactor. It depends on Mg(2+) as a cofactor.

Its subcellular location is the cytoplasm. The enzyme catalyses Endonucleolytic cleavage to 5'-phosphomonoester.. Endonuclease that specifically degrades the RNA of RNA-DNA hybrids. In Thermotoga maritima (strain ATCC 43589 / DSM 3109 / JCM 10099 / NBRC 100826 / MSB8), this protein is Ribonuclease HII (rnhB).